The sequence spans 429 residues: Glutamate-1-semialdehyde 2,1-aminomutase 2 (429 aa).

N6-(pyridoxal phosphate)lysine is present on lysine 268.

The protein belongs to the class-III pyridoxal-phosphate-dependent aminotransferase family. HemL subfamily. In terms of assembly, homodimer. Pyridoxal 5'-phosphate is required as a cofactor.

It localises to the cytoplasm. The catalysed reaction is (S)-4-amino-5-oxopentanoate = 5-aminolevulinate. It participates in porphyrin-containing compound metabolism; protoporphyrin-IX biosynthesis; 5-aminolevulinate from L-glutamyl-tRNA(Glu): step 2/2. This Geobacillus kaustophilus (strain HTA426) protein is Glutamate-1-semialdehyde 2,1-aminomutase 2.